A 181-amino-acid polypeptide reads, in one-letter code: Protein Syd (181 aa).

It belongs to the Syd family.

It is found in the cell inner membrane. Functionally, interacts with the SecY protein in vivo. May bind preferentially to an uncomplexed state of SecY, thus functioning either as a chelating agent for excess SecY in the cell or as a regulatory factor that negatively controls the translocase function. The polypeptide is Protein Syd (Escherichia fergusonii (strain ATCC 35469 / DSM 13698 / CCUG 18766 / IAM 14443 / JCM 21226 / LMG 7866 / NBRC 102419 / NCTC 12128 / CDC 0568-73)).